We begin with the raw amino-acid sequence, 377 residues long: Peptidyl-prolyl cis-trans isomerase D (377 aa).

Residues 11-178 (YFDIQIGSQK…TDVTIVDCGE (168 aa)) form the PPIase cyclophilin-type domain. 3 TPR repeats span residues 220–253 (ASEL…LNEF), 273–306 (FTLH…ADAA), and 314–347 (AKAY…APGD).

Belongs to the cyclophilin-type PPIase family. PPIase D subfamily.

The protein resides in the cytoplasm. It catalyses the reaction [protein]-peptidylproline (omega=180) = [protein]-peptidylproline (omega=0). Its function is as follows. PPIases accelerate the folding of proteins. It catalyzes the cis-trans isomerization of proline imidic peptide bonds in oligopeptides. This is Peptidyl-prolyl cis-trans isomerase D (cpr6) from Aspergillus fumigatus (strain ATCC MYA-4609 / CBS 101355 / FGSC A1100 / Af293) (Neosartorya fumigata).